The sequence spans 818 residues: MKPIPSPEPPGQLRLTPRRKDKGEAEWERHRTRERLEATLAGLAELDCLRHRQQLLVQNVLSPGTHGQDAAPTGDSPRSDEQKLLEENISLLKKQLNCLRKRDAGLLSQLHELDKQINDLKIDSEKTEETDSRPSSGFYELSDGTSGSLSNSSNSVFSECLSSCHSSTCFCNPLETSLNLTDGQAKSAEDFLEWLDYRESQHETGTVRCSFSAPHSNSVEVTADVHPKYQCDLVSKNGNDVYRYPSPLHAVAVQSPMFLISVMGNIKAEEPEEEIGPNDNDDCIVPELDHLKDEDSFLHQSSLCSLPLSSGKKMDGYILSIIHKKAHPVRTNKPRTSVNADPGKGILRHGSICVKQTVGVSQSNAVNLKNSKQTCLHSAGMISVDNSTYPSLKPCSKESLSEQLESKRMPSISTYPSCNVNELQSQNNSRNTVKSVCQGLARGSVAMTSNVQKENVTPNAPANLPNASSSVCNGSPRESTQNSALLPQEIKVVPPVKRVSLKNTLLSYHESSSFEERPPLDFKSEGSSSQSLDEGMLVNAHYIPAQQHGVKLHKNTKNVKIVKSSTLKHRADVQYVLENGSQTLKEKSKVVGKKCRFPEDLDTNKKVKKSTPRVKKIVHPHFEPAAVGRNPVAVRSGIKSHGHPKDVVLAKPKHKRSDYRRWKSSAEISYEEALRRARRRVQREMMGVCAQVPFSHASPYAYIASDSEYSAECESLFHSTVVDTSEDEQSNYTTNCFGDSESSLSEVEFVGESTTSSDTDESGGLIWSQFVHTLPMQATATAELQTTAKAFIKIKASHNLKKKILRFRSGSLKLMTTV.

The span at 1–10 (MKPIPSPEPP) shows a compositional bias: pro residues. Disordered regions lie at residues 1-30 (MKPI…WERH), 60-80 (VLSP…PRSD), 122-144 (IDSE…LSDG), 455-486 (NVTP…SALL), and 510-530 (ESSS…SSSQ). The tract at residues 1–337 (MKPIPSPEPP…PVRTNKPRTS (337 aa)) is interaction with tcf7l1-A. Residues 21-30 (DKGEAEWERH) show a composition bias toward basic and acidic residues. Residues 79-130 (SDEQKLLEENISLLKKQLNCLRKRDAGLLSQLHELDKQINDLKIDSEKTEET) are a coiled coil. The span at 122–132 (IDSEKTEETDS) shows a compositional bias: basic and acidic residues. Residues 455–485 (NVTPNAPANLPNASSSVCNGSPRESTQNSAL) are compositionally biased toward polar residues. Over residues 512-524 (SSFEERPPLDFKS) the composition is skewed to basic and acidic residues. The PDZ-binding signature appears at 815-818 (MTTV).

It belongs to the dapper family. Interacts with dbf4 and tcf7l1-A. Interacts with dvl2/dsh via the C-terminus. Expressed in the animal and dorsal marginal regions at late blastula and early gastrula stages. Expressed predominantly in the anterior neural plate at neurulation. Expressed mainly in the ectodermal placodes, including the eye anlagen and the otic vesicle, at later stages of development.

It is found in the cytoplasm. The protein resides in the nucleus. In terms of biological role, involved in regulation of intracellular signaling pathways during development. Specifically thought to play a role in canonical and/or non-canonical Wnt signaling pathways through interaction with DSH (Dishevelled) family proteins. Binds to dvl2/dsh and impedes the degradation of beta-catenin (ctnnb1-A and possibly ctnnb1-B), thereby enhancing the transcriptional activation of target genes of the Wnt signaling pathway. Also promotes catenin delta/ctnnd1 stability which in turn promotes zbtb33/kaiso sequestration and thus is involved in the regulation of zbtb33/kaiso-mediated transcriptional repression. May also bind to and directly stimulate the transcriptional activity of tcf7l1-A. Required for eye development and neural patterning. This Xenopus laevis (African clawed frog) protein is Dapper 1-A (dact1-a).